We begin with the raw amino-acid sequence, 264 residues long: Putative hydro-lyase cgR_2449 (264 aa).

Belongs to the D-glutamate cyclase family.

This chain is Putative hydro-lyase cgR_2449, found in Corynebacterium glutamicum (strain R).